The chain runs to 130 residues: Small ribosomal subunit protein uS11 (130 aa).

This sequence belongs to the universal ribosomal protein uS11 family. Part of the 30S ribosomal subunit. Interacts with proteins S7 and S18. Binds to IF-3.

Located on the platform of the 30S subunit, it bridges several disparate RNA helices of the 16S rRNA. Forms part of the Shine-Dalgarno cleft in the 70S ribosome. The sequence is that of Small ribosomal subunit protein uS11 from Xanthomonas campestris pv. campestris (strain B100).